A 298-amino-acid polypeptide reads, in one-letter code: tRNA pseudouridine synthase-like 1 (298 aa).

Asp-60 (nucleophile) is an active-site residue. Substrate is bound at residue Tyr-124.

It belongs to the tRNA pseudouridine synthase TruA family.

It carries out the reaction a uridine in tRNA = a pseudouridine in tRNA. This Xenopus laevis (African clawed frog) protein is tRNA pseudouridine synthase-like 1 (pusl1).